The primary structure comprises 489 residues: Envelope glycoprotein C homolog (489 aa).

Residues 1–32 form the signal peptide; the sequence is MVSNMRVLRVLRLTGWVGIFLVLSLQQTSCAG. Residues 33–455 lie on the Virion surface side of the membrane; it reads LPHNVDTHHI…YYDATPSARG (423 aa). The tract at residues 59 to 94 is disordered; the sequence is EVPNSPTTELSTTVATKTAVPTTESTSSSEAHRNSS. Residues 60–69 show a composition bias toward polar residues; sequence VPNSPTTELS. Residues 70–81 are compositionally biased toward low complexity; that stretch reads TTVATKTAVPTT. Residues N92, N112, N204, N346, and N392 are each glycosylated (N-linked (GlcNAc...) asparagine; by host). Residues 250-348 form the Ig-like domain; the sequence is PASVDVLAPP…GDMISTSNAT (99 aa). Residues 456-486 traverse the membrane as a helical segment; it reads MPMIVTITAVLGLALFLGIGIIITALCFYLP. The Cytoplasmic segment spans residues 487–489; it reads GRN.

The protein belongs to the herpesviridae glycoprotein C family.

It is found in the virion membrane. The sequence is that of Envelope glycoprotein C homolog (gC) from Gallus gallus (Chicken).